Consider the following 600-residue polypeptide: NADH-quinone oxidoreductase subunit C/D (600 aa).

Residues 1-190 (MVNNMTDLTA…SPFELTKAKQ (190 aa)) form an NADH dehydrogenase I subunit C region. Positions 214-600 (DFMFLNLGPN…IDFVMSDVDR (387 aa)) are NADH dehydrogenase I subunit D.

It in the N-terminal section; belongs to the complex I 30 kDa subunit family. In the C-terminal section; belongs to the complex I 49 kDa subunit family. NDH-1 is composed of 13 different subunits. Subunits NuoB, CD, E, F, and G constitute the peripheral sector of the complex.

It localises to the cell inner membrane. It carries out the reaction a quinone + NADH + 5 H(+)(in) = a quinol + NAD(+) + 4 H(+)(out). In terms of biological role, NDH-1 shuttles electrons from NADH, via FMN and iron-sulfur (Fe-S) centers, to quinones in the respiratory chain. The immediate electron acceptor for the enzyme in this species is believed to be ubiquinone. Couples the redox reaction to proton translocation (for every two electrons transferred, four hydrogen ions are translocated across the cytoplasmic membrane), and thus conserves the redox energy in a proton gradient. The chain is NADH-quinone oxidoreductase subunit C/D from Escherichia coli O6:H1 (strain CFT073 / ATCC 700928 / UPEC).